A 372-amino-acid polypeptide reads, in one-letter code: Protein phosphatase Mn(2+)-dependent 1K (372 aa).

Residues 1-29 (MLSTAFITLVRSGRNQVKKRVLLSSILLQ) constitute a mitochondrion transit peptide. The tract at residues 46 to 61 (RCSRFDPDGSGQPATW) is critical for association with the BCKDH complex. Residues 94-346 (NVGCASLIGK…DNSTAVVVPF (253 aa)) form the PPM-type phosphatase domain. Mn(2+)-binding residues include Asp-127 and Gly-128. Ser-248 carries the phosphoserine modification. The Mn(2+) site is built by Asp-298 and Asp-337.

It belongs to the PP2C family. As to quaternary structure, interacts with E1 and E2 components of the branched-chain alpha-ketoacid dehydrogenase (BCKDH) complex. Interacts with both BCKDHA and BCKDHB chains of the E1 subunit. Interacts with the 24-meric DBT/E2 core of the BCKD complex with a 1:1 stoichiometry; the N-terminal region (residues 49-61) of PPM1K and C-terminal linker of the lipoyl domain of DBT/E2 (residues 145-160) are critical for this interaction whereas the lipoyl prosthetic group is dispensable. Competes with BCKDK for binding to DBT/E2; this interaction is modulated by branched-chain alpha-keto acids (BCKAs). At steady state, BCKDH holoenzyme preferentially binds BCKDK and BCKDHA/E1 is phosphorylated. In response to high levels of BCKAs, BCKDK is replaced by PPM1K leading to BCKDHA/E1 dephosphorylation. It depends on Mn(2+) as a cofactor.

It is found in the mitochondrion matrix. The enzyme catalyses O-phospho-L-seryl-[3-methyl-2-oxobutanoate dehydrogenase] + H2O = L-seryl-[3-methyl-2-oxobutanoate dehydrogenase] + phosphate. It carries out the reaction O-phospho-L-seryl-[protein] + H2O = L-seryl-[protein] + phosphate. The protein operates within protein modification. Functionally, serine/threonine-protein phosphatase component of macronutrients metabolism. Together with BCKDK serves as a metabolic regulatory node that coordinates branched-chain amino acids (BCAAs) and protein synthesis with glucose and lipid metabolism via two distinct phosphoprotein targets: BCKDHA/E1a subunit of the branched-chain alpha-ketoacid dehydrogenase (BCKDH) complex and ACLY, a lipogenic enzyme of Krebs cycle. At high levels of branched-chain ketoacids (BCKAs), dephosphorylates and activates mitochondrial BCKDH complex, a multisubunit complex consisting of three components, heterotetrameric E1 composed of BCKDHA and BCKDHB chains, 24-meric E2 core composed of DBT and homodimeric E3 composed of DLD, each involved in different steps of BCAA catabolism. Tightly associates with the E2 subunit of BCKDH complex and dephosphorylates Ser-333 of BCKDHA chain of the E1 subunit likely through on-off binding to individual E2 subunits of the 24-meric E2 core to increase the efficiency of the dephosphorylation reaction. Appears to dephosphorylate and inactivate cytosolic ACLY in response to changes of cellular carbohydrate abundance. Overnutrition and in particular high-fructose diet, activates MLXIPL/ChREBP leading to increased BCKDK to PPM1K ratio, phosphorylation of ACLY on Ser-454 and activation of its enzymatic activity that ultimately results in the generation of acetyl-CoA and malonyl-CoA immediate substrates of de novo lipogenesis. Recognizes phosphosites having SxS or RxxS motifs and strictly depends on Mn(2+) ions for the phosphatase activity. Regulates Ca(2+)-induced opening of mitochondrial transition pore and apoptotic cell death. This chain is Protein phosphatase Mn(2+)-dependent 1K (Ppm1k), found in Rattus norvegicus (Rat).